The primary structure comprises 426 residues: Protein BTN1 (426 aa).

A signal peptide spans methionine 1–alanine 32. The next 10 helical transmembrane spans lie at isoleucine 44–isoleucine 64, valine 67–isoleucine 87, isoleucine 99–leucine 119, isoleucine 129–valine 149, methionine 154–isoleucine 174, isoleucine 243–valine 263, isoleucine 290–threonine 310, leucine 318–tyrosine 338, leucine 340–glycine 360, and glycine 384–leucine 404.

The protein belongs to the battenin family.

Its subcellular location is the vacuole membrane. Functionally, involved in vacuolar transport and vacuole pH homeostasis. Also required for cytokinesis. This Candida albicans (strain SC5314 / ATCC MYA-2876) (Yeast) protein is Protein BTN1 (BTN1).